Consider the following 436-residue polypeptide: uncharacterized protein (436 aa).

A helical membrane pass occupies residues 1–21 (MILLQVICTIWTCLFIPLLNA). 2 BNR repeats span residues 57–68 (WISSDSGENWEA) and 101–112 (YVTDDRGKSWRA). N157 carries N-linked (GlcNAc...) asparagine glycosylation. BNR repeat units follow at residues 229 to 240 (ALSTDGGKTFKK) and 394 to 405 (KISVDNGLTWSN).

It localises to the membrane. This is an uncharacterized protein from Saccharomyces cerevisiae (strain ATCC 204508 / S288c) (Baker's yeast).